The primary structure comprises 371 residues: 4-hydroxy-3-methylbut-2-en-1-yl diphosphate synthase (flavodoxin) (371 aa).

Positions 272, 275, 307, and 314 each coordinate [4Fe-4S] cluster.

This sequence belongs to the IspG family. Requires [4Fe-4S] cluster as cofactor.

The enzyme catalyses (2E)-4-hydroxy-3-methylbut-2-enyl diphosphate + oxidized [flavodoxin] + H2O + 2 H(+) = 2-C-methyl-D-erythritol 2,4-cyclic diphosphate + reduced [flavodoxin]. It functions in the pathway isoprenoid biosynthesis; isopentenyl diphosphate biosynthesis via DXP pathway; isopentenyl diphosphate from 1-deoxy-D-xylulose 5-phosphate: step 5/6. In terms of biological role, converts 2C-methyl-D-erythritol 2,4-cyclodiphosphate (ME-2,4cPP) into 1-hydroxy-2-methyl-2-(E)-butenyl 4-diphosphate. The polypeptide is 4-hydroxy-3-methylbut-2-en-1-yl diphosphate synthase (flavodoxin) (Magnetococcus marinus (strain ATCC BAA-1437 / JCM 17883 / MC-1)).